Reading from the N-terminus, the 374-residue chain is Cell division protein C (374 aa).

One can recognise an MIT domain in the interval 11 to 73 (ARKYAINAVK…YKRRIEVLKE (63 aa)). Residue 144–151 (GPPGCGKT) coordinates ATP.

It belongs to the AAA ATPase family. As to quaternary structure, interacts with CdvB.

It localises to the cytoplasm. The protein localises to the nucleoid. In terms of biological role, part of a cell division machinery. The CdvA, CdvB and CdvC proteins polymerize between segregating nucleoids and persist throughout cell division, forming a successively smaller structure during constriction. The chain is Cell division protein C from Sulfolobus acidocaldarius (strain ATCC 33909 / DSM 639 / JCM 8929 / NBRC 15157 / NCIMB 11770).